We begin with the raw amino-acid sequence, 201 residues long: MEPVSTITGKAVVLPVENIDTDQIIPARFLKVTDRSGLAAGLFEAWRYQADGTPNPDFPLNRPEAAGATILISGRNFGCGSSREHAPWALQDYGFKAVLAPSFADIFRSNSLKIGLLPVTIDQAVYDELVARYAADPQMHLTIDLATQTVTLPDGRQVHFPIDAFSKYCLLHGVDQLGFLLQQEEAIIAYEASHPQPVTTR.

The protein belongs to the LeuD family. LeuD type 1 subfamily. As to quaternary structure, heterodimer of LeuC and LeuD.

It catalyses the reaction (2R,3S)-3-isopropylmalate = (2S)-2-isopropylmalate. It functions in the pathway amino-acid biosynthesis; L-leucine biosynthesis; L-leucine from 3-methyl-2-oxobutanoate: step 2/4. In terms of biological role, catalyzes the isomerization between 2-isopropylmalate and 3-isopropylmalate, via the formation of 2-isopropylmaleate. This chain is 3-isopropylmalate dehydratase small subunit, found in Chloroflexus aurantiacus (strain ATCC 29366 / DSM 635 / J-10-fl).